Consider the following 1024-residue polypeptide: Protein tiptop (1024 aa).

The segment covering 20–35 (ELTSPRCQSRDSNTSA) has biased composition (polar residues). 2 disordered regions span residues 20-40 (ELTS…AGAG) and 138-215 (EGEV…ISAD). Acidic residues predominate over residues 159 to 175 (DDQEEDQEQDQEQEQEQ). The segment at 317–341 (FKCVWCKQSFSTLANLTAHMKETQH) adopts a C2H2-type 1 zinc-finger fold. Positions 350–392 (LPTGGVGTPSAPPPTRLATSASNSACSSSSSSTSSSSNSSKSE) are disordered. Positions 368-391 (TSASNSACSSSSSSTSSSSNSSKS) are enriched in low complexity. A C2H2-type 2 zinc finger spans residues 426–450 (LKCMWCGQSFRSLAEMTSHMQETQH). 5 disordered regions span residues 466–489 (GDER…SSPS), 519–576 (AQKS…SLDS), 712–759 (SRDR…IKAE), 786–818 (FSME…SLLA), and 868–891 (ETTD…ASAT). Residues 477–489 (VPSTSTAAPSSPS) are compositionally biased toward low complexity. The C2H2-type 3 zinc finger occupies 499-523 (LTCKVCDQAFGSLKELSTHMAQKSH). The segment covering 527–537 (SPAPSASPPAA) has biased composition (low complexity). Residues 543-558 (KRGRQNRNEKRKKSLP) show a composition bias toward basic residues. Positions 718-729 (SESSSASRVESS) are enriched in low complexity. A compositionally biased stretch (pro residues) spans 745–755 (TPAPPPPPPPT). Residues 786-795 (FSMEACRESP) are compositionally biased toward basic and acidic residues. Positions 796–808 (RSVSKSPAPQTER) are enriched in polar residues. The segment covering 874–891 (STGLRSASSAGSSTASAT) has biased composition (low complexity). The C2H2-type 4 zinc finger occupies 926–949 (IKCSYCDTPFASKGAYRHHLSKVH). The segment at 954–1004 (AGEDSPRLKSPAVQSPRSMPLASPRRSASRSPATGSQQPPPSPTISPYDES) is disordered. The segment covering 968 to 990 (SPRSMPLASPRRSASRSPATGSQ) has biased composition (low complexity).

Belongs to the teashirt C2H2-type zinc-finger protein family. Expression in the Malpighian tubules (MTs) and stomatogastric nervous system starts at embryonic stage 10. At stage 11, expression in the head domain is initiated in the clypeolabrum in two bilaterally symmetric clusters of cells. At stage 12, expression appears in the central nervous system (CNS) of the trunk and the epidermis. The staining in the hindgut is maintained throughout embryogenesis. At stage 13, expression is present in elongating MTs. The anterior staining is detected in cells that invaginate into the stomodeum and by stage 15 onwards, in cells close to the pharynx. Also expressed in cells of the brain, the second constriction of the gut, the trunk epidermis, the anterior segments of the CNS (the three thoracic and the first two abdominal segments) and in the MTs. From stage 12 onwards, tsh and tio are colocalized in some cells.

Its subcellular location is the nucleus. Functionally, tiptop (tio) and teashirt (tsh) have, on the whole, common activities. Tio and tsh repress each other's expression and tsh has a crucial role for trunk patterning that is in part masked by ectopic expression of tiptop. Both genes share a common activity required for the activation of Ser and svb and the maintenance of en and wg. This chain is Protein tiptop (tio), found in Drosophila melanogaster (Fruit fly).